The sequence spans 237 residues: Uridylate kinase (237 aa).

12 to 15 (KLSG) contributes to the ATP binding site. The interval 20–25 (GDEGFG) is involved in allosteric activation by GTP. Residue G54 participates in UMP binding. Residues G55 and R59 each contribute to the ATP site. Residues D74 and 135-142 (TGSPFFTT) each bind UMP. T162, Y168, and D171 together coordinate ATP.

The protein belongs to the UMP kinase family. In terms of assembly, homohexamer.

It is found in the cytoplasm. The enzyme catalyses UMP + ATP = UDP + ADP. It participates in pyrimidine metabolism; CTP biosynthesis via de novo pathway; UDP from UMP (UMPK route): step 1/1. With respect to regulation, allosterically activated by GTP. Inhibited by UTP. Catalyzes the reversible phosphorylation of UMP to UDP. This is Uridylate kinase from Actinobacillus pleuropneumoniae serotype 5b (strain L20).